The sequence spans 765 residues: Protein transport protein Sec23A (765 aa).

Zn(2+) is bound by residues C61, C66, C85, and C88. A Gelsolin-like repeat occupies 632–718 (PEPVLLDSSS…EHGGSQARFL (87 aa)).

Belongs to the SEC23/SEC24 family. SEC23 subfamily. As to quaternary structure, COPII is composed of at least five proteins: the Sec23/24 complex, the Sec13/31 complex and Sar1.

Its subcellular location is the cytoplasmic vesicle. It is found in the COPII-coated vesicle membrane. The protein resides in the endoplasmic reticulum membrane. The protein localises to the cytoplasm. It localises to the cytosol. Its function is as follows. Component of the coat protein complex II (COPII) which promotes the formation of transport vesicles from the endoplasmic reticulum (ER). The coat has two main functions, the physical deformation of the endoplasmic reticulum membrane into vesicles and the selection of cargo molecules for their transport to the Golgi complex. The protein is Protein transport protein Sec23A of Xenopus tropicalis (Western clawed frog).